Consider the following 890-residue polypeptide: MTDVTIKTLAAERQTSVERLVQQFADAGIRKSADDSVSAQEKQTLIDHLNQKNSGPDKLTLQRKTRSTLNIPGTGGKSKSVQIEVRKKRTFVKRDPQEAERLAAEEQAQREAEEQARREAEESAKREAQQKAEREAAEQAKREAAEQAKREAAEKDKVSNQQDDMTKNAQAEKARREQEAAELKRKAEEEARRKLEEEARRVAEEARRMAEENKWTDNAEPTEDSSDYHVTTSQHARQAEDESDREVEGGRGRGRNAKAARPKKGNKHAESKADREEARAAVRGGKGGKRKGSSLQQGFQKPAQAVNRDVVIGETITVGELANKMAVKGSQVIKAMMKLGAMATINQVIDQETAQLVAEEMGHKVILRRENELEEAVMSDRDTGAAAEPRAPVVTIMGHVDHGKTSLLDYIRSTKVASGEAGGITQHIGAYHVETENGMITFLDTPGHAAFTSMRARGAQATDIVVLVVAADDGVMPQTIEAIQHAKAAQVPVVVAVNKIDKPEADPDRVKNELSQYGILPEEWGGESQFVHVSAKAGTGIDELLDAILLQAEVLELKAVRKGMASGAVIESFLDKGRGPVATVLVREGTLHKGDIVLCGFEYGRVRAMRNELGREVLEAGPSIPVEILGLSGVPAAGDEVTVVRDEKKAREVALYRQGKFREVKLARQQKSKLENMFANMTEGEVHEVNIVLKADVQGSVEAISDSLLKLSTDEVKVKIIGSGVGGITETDATLAAASNAILVGFNVRADASARKVIEAESLDLRYYSVIYNLIDEVKAAMSGMLSPELKQQIIGLAEVRDVFKSPKFGAIAGCMVTEGVVKRHNPIRVLRDNVVIYEGELESLRRFKDDVNEVRNGMECGIGVKNYNDVRTGDVIEVFEIIEIQRTIA.

The interval 45-304 (LIDHLNQKNS…LQQGFQKPAQ (260 aa)) is disordered. A compositionally biased stretch (polar residues) spans 67 to 81 (STLNIPGTGGKSKSV). Residues 92-217 (VKRDPQEAER…RMAEENKWTD (126 aa)) show a composition bias toward basic and acidic residues. Residues 252 to 266 (GRGRNAKAARPKKGN) are compositionally biased toward basic residues. The segment covering 267–280 (KHAESKADREEARA) has biased composition (basic and acidic residues). One can recognise a tr-type G domain in the interval 389 to 558 (PRAPVVTIMG…LLQAEVLELK (170 aa)). The interval 398–405 (GHVDHGKT) is G1. 398 to 405 (GHVDHGKT) contributes to the GTP binding site. The interval 423-427 (GITQH) is G2. Residues 444 to 447 (DTPG) are G3. Residues 444-448 (DTPGH) and 498-501 (NKID) each bind GTP. Residues 498–501 (NKID) are G4. Residues 534–536 (SAK) form a G5 region. K808 carries the post-translational modification N6-acetyllysine.

The protein belongs to the TRAFAC class translation factor GTPase superfamily. Classic translation factor GTPase family. IF-2 subfamily.

The protein localises to the cytoplasm. Functionally, one of the essential components for the initiation of protein synthesis. Protects formylmethionyl-tRNA from spontaneous hydrolysis and promotes its binding to the 30S ribosomal subunits. Also involved in the hydrolysis of GTP during the formation of the 70S ribosomal complex. This chain is Translation initiation factor IF-2, found in Escherichia coli (strain SMS-3-5 / SECEC).